The chain runs to 235 residues: NADH-quinone oxidoreductase subunit B 2 (235 aa).

A compositionally biased stretch (low complexity) spans 1-14 (MGLTSRPTPASRQP). A disordered region spans residues 1-24 (MGLTSRPTPASRQPASPPPADPVL). [4Fe-4S] cluster contacts are provided by Cys-63, Cys-64, Cys-129, and Cys-159. The tract at residues 188 to 235 (TGATGGGPSTDALRSGLVAAPTAPGPTAPASTAPGPTAPAPTQDEERR) is disordered.

It belongs to the complex I 20 kDa subunit family. As to quaternary structure, NDH-1 is composed of 14 different subunits. Subunits NuoB, C, D, E, F, and G constitute the peripheral sector of the complex. The cofactor is [4Fe-4S] cluster.

The protein resides in the cell membrane. The catalysed reaction is a quinone + NADH + 5 H(+)(in) = a quinol + NAD(+) + 4 H(+)(out). In terms of biological role, NDH-1 shuttles electrons from NADH, via FMN and iron-sulfur (Fe-S) centers, to quinones in the respiratory chain. The immediate electron acceptor for the enzyme in this species is believed to be a menaquinone. Couples the redox reaction to proton translocation (for every two electrons transferred, four hydrogen ions are translocated across the cytoplasmic membrane), and thus conserves the redox energy in a proton gradient. The protein is NADH-quinone oxidoreductase subunit B 2 of Streptomyces griseus subsp. griseus (strain JCM 4626 / CBS 651.72 / NBRC 13350 / KCC S-0626 / ISP 5235).